We begin with the raw amino-acid sequence, 397 residues long: MQFKRLSDLIARGELQGKRVFIRADLNVPQDSTGNITEDTRIRASVPAIQQALQAGAAVMVTSHLGRPVEGEFKPADTLAPIAQRLSELLGQPVALKQNWVDGVDVAPGQVVLLENCRVNKGEKKNDDALAQKIAALCDVYVNDAFGTAHRAEATTHGIAKYAPVACAGPLLAAELDALGKALGEPASPLVAIVAGSKVSTKLTILKTLADKVDNLIVGGGIANTFMLAAGLKIGKSLAEADLLGDAKAIIDMMAKRGASVPIPVDVVCAKEFAPTAAATVKDVADVADDDMILDIGPKTAELLARQIAQAGTIVWNGPVGVFEFDQFANGTKTLAYAIAESKGFSVAGGGDTLAAIAKYDIGDKIDYISTGGGAFLEFLEGKTLPAVAILEERAQG.

Substrate-binding positions include 25–27, R41, 64–67, R118, and R151; these read DLN and HLGR. ATP contacts are provided by residues K202, E324, and 350-353; that span reads GGDT.

The protein belongs to the phosphoglycerate kinase family. In terms of assembly, monomer.

The protein localises to the cytoplasm. The catalysed reaction is (2R)-3-phosphoglycerate + ATP = (2R)-3-phospho-glyceroyl phosphate + ADP. Its pathway is carbohydrate degradation; glycolysis; pyruvate from D-glyceraldehyde 3-phosphate: step 2/5. This is Phosphoglycerate kinase from Janthinobacterium sp. (strain Marseille) (Minibacterium massiliensis).